The primary structure comprises 657 residues: Hemocyanin A chain (657 aa).

Cysteines 93 and 98 form a disulfide. N-linked (GlcNAc...) asparagine glycosylation is present at Asn167. Positions 194, 198, 224, 344, 348, and 384 each coordinate Cu cation. Cystine bridges form between Cys483–Cys502 and Cys562–Cys609. A disordered region spans residues 594–616 (EGHNGGHDYGGTHAQCGVHGEAY).

The protein belongs to the tyrosinase family. Hemocyanin subfamily. In terms of assembly, hexamer of a number of different chains, of which A, B, and C have been identified. Hemolymph.

Its subcellular location is the secreted. The protein resides in the extracellular space. Functionally, hemocyanins are copper-containing oxygen carriers occurring freely dissolved in the hemolymph of many mollusks and arthropods. The sequence is that of Hemocyanin A chain from Panulirus interruptus (California spiny lobster).